A 78-amino-acid chain; its full sequence is Small ribosomal subunit protein uS17 (78 aa).

This sequence belongs to the universal ribosomal protein uS17 family. As to quaternary structure, part of the 30S ribosomal subunit.

In terms of biological role, one of the primary rRNA binding proteins, it binds specifically to the 5'-end of 16S ribosomal RNA. This chain is Small ribosomal subunit protein uS17, found in Wolbachia pipientis wMel.